A 316-amino-acid chain; its full sequence is Ornithine carbamoyltransferase (316 aa).

Carbamoyl phosphate contacts are provided by residues Ser-59 to Thr-62, Gln-86, Arg-110, and His-137 to Gln-140. L-ornithine contacts are provided by residues Asn-168, Asp-232, and Ser-236 to Met-237. Residues Cys-273–Leu-274 and Arg-301 contribute to the carbamoyl phosphate site.

Belongs to the aspartate/ornithine carbamoyltransferase superfamily. OTCase family.

It is found in the cytoplasm. The catalysed reaction is carbamoyl phosphate + L-ornithine = L-citrulline + phosphate + H(+). It participates in amino-acid degradation; L-arginine degradation via ADI pathway; carbamoyl phosphate from L-arginine: step 2/2. Reversibly catalyzes the transfer of the carbamoyl group from carbamoyl phosphate (CP) to the N(epsilon) atom of ornithine (ORN) to produce L-citrulline. The polypeptide is Ornithine carbamoyltransferase (Listeria monocytogenes serotype 4a (strain HCC23)).